The primary structure comprises 744 residues: Tripartite motif-containing protein 2 (744 aa).

At serine 10 the chain carries Phosphoserine. The segment at 23–64 (CSICLERYKNPKVLPCLHTFCERCLQNYIPAHSLTLSCPVCR) adopts an RING-type zinc-finger fold. The B box-type zinc-finger motif lies at 113–154 (GKPLSCPNHDGNVMDFYCQSCETAMCRECTEGEHAEHPTVPL). Cysteine 118, histidine 121, cysteine 141, and histidine 146 together coordinate Zn(2+). The stretch at 320–421 (TTNAVASETV…IRGSPFKLKV (102 aa)) is one Filamin repeat. Threonine 371 bears the Phosphothreonine mark. A phosphoserine mark is found at serine 375, serine 424, and serine 428. The disordered stretch occupies residues 432 to 462 (EGVKRRVKSPGSGHVKQKAVKRPASMYSTGK). NHL repeat units follow at residues 473-516 (IFRV…FSND), 520-563 (KSRF…FSSD), 564-605 (GKFK…FQPN), 609-652 (VTRF…FNQE), 656-699 (MLKF…FDGS), and 700-743 (GSFL…YRYL).

Belongs to the TRIM/RBCC family. Forms homooligomers. Interacts with TRIM3; this interaction reduces TRIM2 activity. Interacts with myosin V; myosin V may not be a substrate for ubiquitination. Interacts with NEFL. Interacts with phosphorylated BCL2L11. Interacts with SIRPA. In terms of processing, RING-type zinc finger-dependent and UBE2D1-dependent autoubiquitination.

Its subcellular location is the cytoplasm. The catalysed reaction is S-ubiquitinyl-[E2 ubiquitin-conjugating enzyme]-L-cysteine + [acceptor protein]-L-lysine = [E2 ubiquitin-conjugating enzyme]-L-cysteine + N(6)-ubiquitinyl-[acceptor protein]-L-lysine.. The protein operates within protein modification; protein ubiquitination. UBE2D1-dependent E3 ubiquitin-protein ligase that mediates the ubiquitination of NEFL and of phosphorylated BCL2L11. Plays a neuroprotective function. May play a role in neuronal rapid ischemic tolerance. Plays a role in antiviral immunity and limits New World arenavirus infection independently of its ubiquitin ligase activity. This is Tripartite motif-containing protein 2 (TRIM2) from Bos taurus (Bovine).